The chain runs to 180 residues: Translation initiation factor IF-3 (180 aa).

This sequence belongs to the IF-3 family. In terms of assembly, monomer.

The protein resides in the cytoplasm. IF-3 binds to the 30S ribosomal subunit and shifts the equilibrium between 70S ribosomes and their 50S and 30S subunits in favor of the free subunits, thus enhancing the availability of 30S subunits on which protein synthesis initiation begins. This Salmonella typhi protein is Translation initiation factor IF-3.